Here is a 638-residue protein sequence, read N- to C-terminus: Asparagine--tRNA ligase, cytoplasmic 2 (638 aa).

The segment covering 1 to 16 has biased composition (basic and acidic residues); sequence MESHGKTHQKEHDNDL. Disordered stretches follow at residues 1-23 and 62-87; these read MESH…PITL and VKKN…DQAH.

The protein belongs to the class-II aminoacyl-tRNA synthetase family.

It localises to the cytoplasm. The protein localises to the cytosol. It catalyses the reaction tRNA(Asn) + L-asparagine + ATP = L-asparaginyl-tRNA(Asn) + AMP + diphosphate + H(+). The sequence is that of Asparagine--tRNA ligase, cytoplasmic 2 from Arabidopsis thaliana (Mouse-ear cress).